Here is a 154-residue protein sequence, read N- to C-terminus: 17.4 kDa class I heat shock protein (154 aa).

Positions 40-154 (DAAAFAGARI…PDVKSIQITG (115 aa)) constitute a sHSP domain.

It belongs to the small heat shock protein (HSP20) family. In terms of assembly, may form oligomeric structures.

Its subcellular location is the cytoplasm. The polypeptide is 17.4 kDa class I heat shock protein (HSP17.4) (Oryza sativa subsp. japonica (Rice)).